The primary structure comprises 249 residues: 3-deoxy-manno-octulosonate cytidylyltransferase (249 aa).

This sequence belongs to the KdsB family.

The protein resides in the cytoplasm. The catalysed reaction is 3-deoxy-alpha-D-manno-oct-2-ulosonate + CTP = CMP-3-deoxy-beta-D-manno-octulosonate + diphosphate. It functions in the pathway nucleotide-sugar biosynthesis; CMP-3-deoxy-D-manno-octulosonate biosynthesis; CMP-3-deoxy-D-manno-octulosonate from 3-deoxy-D-manno-octulosonate and CTP: step 1/1. It participates in bacterial outer membrane biogenesis; lipopolysaccharide biosynthesis. In terms of biological role, activates KDO (a required 8-carbon sugar) for incorporation into bacterial lipopolysaccharide in Gram-negative bacteria. In Coxiella burnetii (strain CbuG_Q212) (Coxiella burnetii (strain Q212)), this protein is 3-deoxy-manno-octulosonate cytidylyltransferase.